The chain runs to 538 residues: Transmembrane protein 266 (538 aa).

At 1 to 102 (MALVTSFNMA…VFLLSASLNS (102 aa)) the chain is on the cytoplasmic side. The helical transmembrane segment at 103-123 (FLVACVILVVILLTLELLIDT) threads the bilayer. Residues 124-130 (KLLQFSN) lie on the Extracellular side of the membrane. Residues 131–151 (AFQFAGVIHWISLVILSVFFS) form a helical membrane-spanning segment. The Cytoplasmic portion of the chain corresponds to 152 to 169 (ETVLRIVVLGIWDYIENK). Residues 170–190 (IEVFDGAVIILSLAPMVASTV) form a helical membrane-spanning segment. The Extracellular segment spans residues 191–199 (ANGPRSPWD). A helical transmembrane segment spans residues 200 to 220 (AISLIIMFRIWRVKRVIDAYV). Residues 221–538 (LPVKLEMEMV…EPKLHTVPEA (318 aa)) lie on the Cytoplasmic side of the membrane. Positions 232 to 278 (QQYEKAKAIQDEQLERLTQICQEQGFEIRQLRAHLAQQDLDLAAERE) form a coiled coil. Disordered regions lie at residues 380–435 (NSTC…PLPL) and 453–483 (SSLS…VQTS). The span at 381–396 (STCASATSETTSHSTC) shows a compositional bias: low complexity. The segment covering 397 to 417 (GSVTRAQSASSQTLGSSTDCS) has biased composition (polar residues). The segment covering 425-434 (PSKPRSSPLP) has biased composition (low complexity).

In terms of assembly, homodimer; disulfide-linked. As to expression, in brain, present in the granule layer of the cerebellar cortex. Localizes on the post-synaptic side of glutamatergic mossy fibers and granule cells in the cerebellum (at protein level). Predominantly expressed in granule cells in cerebellum (at protein level).

The protein resides in the cell projection. The protein localises to the dendrite. It localises to the perikaryon. Its subcellular location is the cell membrane. Voltage-sensor protein present on the post-synaptic side of glutamatergic mossy fibers and granule cells in the cerebellum. Despite the presence of a voltage-sensor segment, does not form a functional ion channel and its precise role remains unclear. Undergoes both rapid and slow structural rearrangements in response to changes in voltage. Contains a zinc-binding site that can regulate the slow conformational transition. The polypeptide is Transmembrane protein 266 (Mus musculus (Mouse)).